A 310-amino-acid chain; its full sequence is N-acetyl-gamma-glutamyl-phosphate reductase (310 aa).

Cysteine 117 is a catalytic residue.

Belongs to the NAGSA dehydrogenase family. Type 2 subfamily.

Its subcellular location is the cytoplasm. It catalyses the reaction N-acetyl-L-glutamate 5-semialdehyde + phosphate + NADP(+) = N-acetyl-L-glutamyl 5-phosphate + NADPH + H(+). It participates in amino-acid biosynthesis; L-arginine biosynthesis; N(2)-acetyl-L-ornithine from L-glutamate: step 3/4. In terms of biological role, catalyzes the NADPH-dependent reduction of N-acetyl-5-glutamyl phosphate to yield N-acetyl-L-glutamate 5-semialdehyde. The protein is N-acetyl-gamma-glutamyl-phosphate reductase of Brucella abortus (strain S19).